A 396-amino-acid chain; its full sequence is MAKAKFERTKPHCNIGTIGHVDHGKTSLTAAITKVLAETGGATFVDYANIDKAPEERERGITISTAHVEYETEQRHYAHVDCPGHADYVKNMITGAAQMDGGILVVSATDGPMPQTREHILLARQVGVPALVVFMNKVDLVDDAEILELVELEVRELLSSYEFPGDDIPVIKGSAVKALDGTNDEIGRNAVLELMAAVDSYIPQPERPLDKPFLMPIEDVFSISGRGTVVTGRVETGMVKVGEEVEIVGIKDTRKTTVTGVEMFRKLLDQGQAGDNIGALIRGVGREEVERGQVLAKPGSIKPHTDFSSEVYVLSKEEGGRHTPFFANYRPQFYFRTTDVTGTVELPEGTEMVMPGDNVKLGVKLIAPIAMEEGLRFSIREGGRTVGAGVVSSISK.

The region spanning 10-206 (KPHCNIGTIG…AVDSYIPQPE (197 aa)) is the tr-type G domain. Residues 19-26 (GHVDHGKT) form a G1 region. 19–26 (GHVDHGKT) is a GTP binding site. Thr-26 lines the Mg(2+) pocket. Residues 60 to 64 (GITIS) are G2. Residues 81 to 84 (DCPG) form a G3 region. GTP-binding positions include 81–85 (DCPGH) and 136–139 (NKVD). Positions 136–139 (NKVD) are G4. Residues 174–176 (SAV) are G5.

This sequence belongs to the TRAFAC class translation factor GTPase superfamily. Classic translation factor GTPase family. EF-Tu/EF-1A subfamily. In terms of assembly, monomer.

Its subcellular location is the cytoplasm. It carries out the reaction GTP + H2O = GDP + phosphate + H(+). Its function is as follows. GTP hydrolase that promotes the GTP-dependent binding of aminoacyl-tRNA to the A-site of ribosomes during protein biosynthesis. The sequence is that of Elongation factor Tu from Rhizorhabdus wittichii (strain DSM 6014 / CCUG 31198 / JCM 15750 / NBRC 105917 / EY 4224 / RW1) (Sphingomonas wittichii).